The chain runs to 440 residues: MKIINLLAYQILDSRGQPTVAVKLFLENDQSVIAMVPSGASTGAKEALELRDGDVNYFFNKSVKLAIQNINNIIRPHLINKNVLNFFELDNLLINLDGTENKSKLGANALLGVSIAIVKAGAIAASKPLYQYIKEDLMHNYDVNYYAPIPLMNFINGGAHADNDLDIQEFMIVPLNAISFSQAIQIGSEIFHQLDKLLKSNHLSTTKGDEGGFAPMLKNNYVTLELLVHAIKKAHYLPSKTQGVCLALDVAASELYENGKYFFKKSSSHNITLEQTSFSSDEWIKYWSKLVSMFPIISIEDCFEENDWNSFALFLKNNPHIQVVGDDLYCTNLKYLQKGIDFKATNAILIKPNQIGTISETLDVIKFAQKNNINTIISHRSGETEDTFIADLAIGVGAGQIKTGSLSRSERIAKYNRILEIEQELKDKLIYEPSKFFKFR.

Gln168 lines the (2R)-2-phosphoglycerate pocket. Glu210 (proton donor) is an active-site residue. 3 residues coordinate Mg(2+): Asp249, Glu300, and Asp326. (2R)-2-phosphoglycerate is bound by residues Lys351, Arg380, Ser381, and Lys402. Lys351 serves as the catalytic Proton acceptor.

It belongs to the enolase family. The cofactor is Mg(2+).

Its subcellular location is the cytoplasm. It localises to the secreted. It is found in the cell surface. The catalysed reaction is (2R)-2-phosphoglycerate = phosphoenolpyruvate + H2O. The protein operates within carbohydrate degradation; glycolysis; pyruvate from D-glyceraldehyde 3-phosphate: step 4/5. Functionally, catalyzes the reversible conversion of 2-phosphoglycerate (2-PG) into phosphoenolpyruvate (PEP). It is essential for the degradation of carbohydrates via glycolysis. The sequence is that of Enolase from Ureaplasma parvum serovar 3 (strain ATCC 27815 / 27 / NCTC 11736).